Consider the following 373-residue polypeptide: D-alanine--D-alanine ligase (373 aa).

Positions 156–363 (KKLLAAEGLP…YPTLLAAMVD (208 aa)) constitute an ATP-grasp domain. 184 to 239 (RERLGLPVFVKPARGGSSIGVSRVTAWDELPAAVALARRHDPKVIVEAAVIGRELE) contributes to the ATP binding site. Residues aspartate 318, glutamate 330, and asparagine 332 each contribute to the Mg(2+) site.

It belongs to the D-alanine--D-alanine ligase family. Requires Mg(2+) as cofactor. Mn(2+) is required as a cofactor.

The protein localises to the cytoplasm. It catalyses the reaction 2 D-alanine + ATP = D-alanyl-D-alanine + ADP + phosphate + H(+). Its pathway is cell wall biogenesis; peptidoglycan biosynthesis. In terms of biological role, cell wall formation. This is D-alanine--D-alanine ligase from Mycolicibacterium smegmatis (strain ATCC 700084 / mc(2)155) (Mycobacterium smegmatis).